The primary structure comprises 180 residues: uncharacterized protein (180 aa).

It belongs to the isochorismatase family.

This is an uncharacterized protein from Bacillus subtilis (strain 168).